The primary structure comprises 324 residues: Adenosine kinase (324 aa).

Residues serine 8, aspartate 12, serine 36, glycine 48, asparagine 52, phenylalanine 102, phenylalanine 116, and 172 to 173 (QQ) each bind substrate. ATP-binding positions include asparagine 195, 223-228 (TLGPKG), and glycine 256. Aspartate 257 contacts substrate. The Proton acceptor role is filled by aspartate 257.

It belongs to the carbohydrate kinase PfkB family. In terms of assembly, homodimer. Mg(2+) is required as a cofactor.

It catalyses the reaction adenosine + ATP = AMP + ADP + H(+). The catalysed reaction is adenosine + GTP = GDP + AMP + H(+). The enzyme catalyses dGTP + adenosine = dGDP + AMP + H(+). Its pathway is purine metabolism; AMP biosynthesis via salvage pathway; AMP from adenosine: step 1/1. In terms of biological role, catalyzes the phosphorylation of adenosine to adenosine monophosphate (AMP). Prefers dGTP and GTP to ATP as phosphate donors in vitro. The polypeptide is Adenosine kinase (adoK) (Mycobacterium bovis (strain ATCC BAA-935 / AF2122/97)).